The primary structure comprises 450 residues: UDP-N-acetylmuramoylalanine--D-glutamate ligase (450 aa).

Residue 119–125 coordinates ATP; the sequence is GSNGKTT.

Belongs to the MurCDEF family.

It localises to the cytoplasm. It carries out the reaction UDP-N-acetyl-alpha-D-muramoyl-L-alanine + D-glutamate + ATP = UDP-N-acetyl-alpha-D-muramoyl-L-alanyl-D-glutamate + ADP + phosphate + H(+). Its pathway is cell wall biogenesis; peptidoglycan biosynthesis. Its function is as follows. Cell wall formation. Catalyzes the addition of glutamate to the nucleotide precursor UDP-N-acetylmuramoyl-L-alanine (UMA). The chain is UDP-N-acetylmuramoylalanine--D-glutamate ligase from Bacillus thuringiensis (strain Al Hakam).